Consider the following 448-residue polypeptide: MRSAVVLALLLCAGQVIALPVNSPMDTGDTEVMKCIVEVISDTLSKPSPVPVSQECFETLRGDERILSILRHQNLLKELQDLALQGAKERAPQQKHSRLEDELAEVLEKQNHQAELKEVTEEALSEDAAEARGDSKEVEENGEDADGARPQAALEPEQESRVEDAQAPGEEKEAINTHSPTRLPSQKHPDPQAEGDSDSPSQGLVDREKGLGAERGQQAKREEEEDEAGEKADAEEEGPTAAFNPHPSLSYKIRKGESWSEALVVDGARKTGAEEAQPPEGQGEREHSRQEEEEEEETAGASRGLFRGGKSRELEQEKEQERLSKEWEDAKRWSKMDQLAKELTAEKRLEGEDEEEDDPDRSMKLSFRARAYGFRGPGLQLRRGWRPSSREDSIEAGLPPPVRGYPEEKKEEEGSANRRPEDQELESLSAIEAELEKVAHQLQALRRG.

An N-terminal signal peptide occupies residues 1-18 (MRSAVVLALLLCAGQVIA). An intrachain disulfide couples cysteine 35 to cysteine 56. Residues 116 to 251 (LKEVTEEALS…AFNPHPSLSY (136 aa)) are disordered. Basic and acidic residues-rich tracts occupy residues 129 to 139 (AEARGDSKEVE) and 158 to 175 (QESRVEDAQAPGEEKEAI). Position 197 is a phosphoserine (serine 197). Residues 205-222 (VDREKGLGAERGQQAKRE) show a composition bias toward basic and acidic residues. Residues 223 to 238 (EEEDEAGEKADAEEEG) are compositionally biased toward acidic residues. Serine 258 and serine 288 each carry phosphoserine. A disordered region spans residues 263–429 (LVVDGARKTG…PEDQELESLS (167 aa)). Glycine 308 bears the Glycine amide mark. A compositionally biased stretch (basic and acidic residues) spans 310 to 350 (KSRELEQEKEQERLSKEWEDAKRWSKMDQLAKELTAEKRLE). Phosphoserine occurs at positions 311, 324, and 362. A Methionine sulfoxide modification is found at methionine 363. Residues serine 389, serine 393, serine 415, and serine 429 each carry the phosphoserine modification. A compositionally biased stretch (basic and acidic residues) spans 405-422 (YPEEKKEEEGSANRRPED). O-linked (Xyl...) (chondroitin sulfate) serine glycosylation occurs at serine 415.

The protein belongs to the chromogranin/secretogranin protein family. As to quaternary structure, self-interacts; self-assembly is promoted in vitro by chondroitin sulfate attachment which occurs at mildly acidic pH conditions. Interacts with SCG3. Interacts with ITPR1 in the secretory granules. In terms of processing, O-glycosylated; contains chondroitin sulfate (CS). CS attachment is pH-dependent, being observed at mildly acidic conditions of pH 5 but not at neutral pH, and promotes self-assembly in vitro. Highly expressed in adrenal medulla and pituitary gland. Weaker expression detected in cerebrum, cerebellum, spinal cord, liver, thyroid gland, striated muscle, lung, spleen, kidney, parotid gland, and sublingual gland.

It localises to the secreted. Its subcellular location is the cytoplasmic vesicle. The protein localises to the secretory vesicle. The protein resides in the neuronal dense core vesicle. Its function is as follows. Strongly inhibits glucose induced insulin release from the pancreas. Functionally, inhibits catecholamine release from chromaffin cells and noradrenergic neurons by acting as a non-competitive nicotinic cholinergic antagonist. Can induce mast cell migration, degranulation and production of cytokines and chemokines. Regulates granule biogenesis in endocrine cells by up-regulating the transcription of protease nexin 1 (SERPINE2) via a cAMP-PKA-SP1 pathway. This leads to inhibition of granule protein degradation in the Golgi complex which in turn promotes granule formation. This Equus caballus (Horse) protein is Chromogranin-A (CHGA).